Here is a 75-residue protein sequence, read N- to C-terminus: Small ribosomal subunit protein bS18 (75 aa).

It belongs to the bacterial ribosomal protein bS18 family. As to quaternary structure, part of the 30S ribosomal subunit. Forms a tight heterodimer with protein bS6.

Its function is as follows. Binds as a heterodimer with protein bS6 to the central domain of the 16S rRNA, where it helps stabilize the platform of the 30S subunit. The chain is Small ribosomal subunit protein bS18 from Glaesserella parasuis serovar 5 (strain SH0165) (Haemophilus parasuis).